We begin with the raw amino-acid sequence, 213 residues long: Cytidylate kinase (213 aa).

9–17 serves as a coordination point for ATP; that stretch reads GPAASGKGT.

This sequence belongs to the cytidylate kinase family. Type 1 subfamily.

The protein resides in the cytoplasm. The enzyme catalyses CMP + ATP = CDP + ADP. It carries out the reaction dCMP + ATP = dCDP + ADP. The chain is Cytidylate kinase from Caulobacter vibrioides (strain ATCC 19089 / CIP 103742 / CB 15) (Caulobacter crescentus).